The following is a 289-amino-acid chain: Methionyl-tRNA formyltransferase (289 aa).

106-109 is a binding site for (6S)-5,6,7,8-tetrahydrofolate; that stretch reads SLLP.

This sequence belongs to the Fmt family.

The enzyme catalyses L-methionyl-tRNA(fMet) + (6R)-10-formyltetrahydrofolate = N-formyl-L-methionyl-tRNA(fMet) + (6S)-5,6,7,8-tetrahydrofolate + H(+). Functionally, attaches a formyl group to the free amino group of methionyl-tRNA(fMet). The formyl group appears to play a dual role in the initiator identity of N-formylmethionyl-tRNA by promoting its recognition by IF2 and preventing the misappropriation of this tRNA by the elongation apparatus. The protein is Methionyl-tRNA formyltransferase of Mycoplasmopsis pulmonis (strain UAB CTIP) (Mycoplasma pulmonis).